A 304-amino-acid chain; its full sequence is Homoserine kinase (304 aa).

90-100 contributes to the ATP binding site; it reads PLARGLGSSAS.

Belongs to the GHMP kinase family. Homoserine kinase subfamily.

It is found in the cytoplasm. It catalyses the reaction L-homoserine + ATP = O-phospho-L-homoserine + ADP + H(+). The protein operates within amino-acid biosynthesis; L-threonine biosynthesis; L-threonine from L-aspartate: step 4/5. Functionally, catalyzes the ATP-dependent phosphorylation of L-homoserine to L-homoserine phosphate. The protein is Homoserine kinase of Staphylococcus aureus (strain JH9).